The primary structure comprises 861 residues: Probable linoleate 9S-lipoxygenase 8 (861 aa).

In terms of domain architecture, PLAT spans 33–160; it reads FTDLASSLTG…NYKSDRIFFA (128 aa). The Lipoxygenase domain maps to 163 to 861; sequence PYLPSETPEL…GKGIPNSVSI (699 aa). A disordered region spans residues 220–245; it reads TLGGSAEYPYPRRGRTGRPPTRTDPK. Residues H522, H527, H713, N717, and I861 each coordinate Fe cation.

Belongs to the lipoxygenase family. In terms of assembly, monomer. It depends on Fe cation as a cofactor.

The protein localises to the cytoplasm. It carries out the reaction (9Z,12Z)-octadecadienoate + O2 = (9S)-hydroperoxy-(10E,12Z)-octadecadienoate. It participates in lipid metabolism; oxylipin biosynthesis. Plant lipoxygenases may be involved in a number of diverse aspects of plant physiology including growth and development, pest resistance, and senescence or responses to wounding. Catalyzes the hydroperoxidation of lipids containing a cis,cis-1,4-pentadiene structure. This chain is Probable linoleate 9S-lipoxygenase 8 (LOX1.8), found in Solanum tuberosum (Potato).